A 609-amino-acid chain; its full sequence is Glutamine--fructose-6-phosphate aminotransferase [isomerizing] (609 aa).

The Nucleophile; for GATase activity role is filled by cysteine 2. One can recognise a Glutamine amidotransferase type-2 domain in the interval 2-218 (CGIVGAIAQR…EGDIAEITRR (217 aa)). 2 SIS domains span residues 286 to 426 (ADDL…LKGL) and 458 to 599 (LAED…VDQP). Lysine 604 serves as the catalytic For Fru-6P isomerization activity.

Homodimer.

It localises to the cytoplasm. It catalyses the reaction D-fructose 6-phosphate + L-glutamine = D-glucosamine 6-phosphate + L-glutamate. In terms of biological role, catalyzes the first step in hexosamine metabolism, converting fructose-6P into glucosamine-6P using glutamine as a nitrogen source. This chain is Glutamine--fructose-6-phosphate aminotransferase [isomerizing], found in Salmonella typhi.